The sequence spans 129 residues: Follitropin subunit beta (129 aa).

A signal peptide spans 1 to 19 (MKSVQFCFLFCCWRAICCR). Disulfide bonds link Cys21-Cys69, Cys35-Cys84, Cys38-Cys122, Cys46-Cys100, Cys50-Cys102, and Cys105-Cys112. 2 N-linked (GlcNAc...) asparagine glycosylation sites follow: Asn25 and Asn42.

This sequence belongs to the glycoprotein hormones subunit beta family. In terms of assembly, heterodimer. The active follitropin is a heterodimer composed of an alpha chain/CGA shared with other hormones and a unique beta chain/FSHB shown here.

It localises to the secreted. Functionally, together with the alpha chain CGA constitutes follitropin, the follicle-stimulating hormone, and provides its biological specificity to the hormone heterodimer. Binds FSHR, a G protein-coupled receptor, on target cells to activate downstream signaling pathways. Follitropin is involved in follicle development and spermatogenesis in reproductive organs. The protein is Follitropin subunit beta (FSHB) of Ovis aries (Sheep).